Here is a 247-residue protein sequence, read N- to C-terminus: DNA polymerase sliding clamp (247 aa).

Belongs to the PCNA family. Homotrimer. The subunits circularize to form a toroid; DNA passes through its center. Replication factor C (RFC) is required to load the toroid on the DNA.

Its function is as follows. Sliding clamp subunit that acts as a moving platform for DNA processing. Responsible for tethering the catalytic subunit of DNA polymerase and other proteins to DNA during high-speed replication. This chain is DNA polymerase sliding clamp, found in Methanoculleus marisnigri (strain ATCC 35101 / DSM 1498 / JR1).